A 91-amino-acid polypeptide reads, in one-letter code: Large ribosomal subunit protein uL23c (91 aa).

The protein belongs to the universal ribosomal protein uL23 family. In terms of assembly, part of the 50S ribosomal subunit.

It localises to the plastid. Its subcellular location is the chloroplast. In terms of biological role, binds to 23S rRNA. This chain is Large ribosomal subunit protein uL23c (rpl23), found in Pinus thunbergii (Japanese black pine).